The primary structure comprises 303 residues: Recombination-associated protein RdgC (303 aa).

This sequence belongs to the RdgC family.

It is found in the cytoplasm. The protein localises to the nucleoid. Its function is as follows. May be involved in recombination. The sequence is that of Recombination-associated protein RdgC from Yersinia enterocolitica serotype O:8 / biotype 1B (strain NCTC 13174 / 8081).